A 625-amino-acid chain; its full sequence is Dual specificity protein phosphatase 8 (625 aa).

Residues 23 to 138 form the Rhodanese domain; the sequence is GPGGPLVIDS…FSSCFPGLCE (116 aa). Positions 160–302 constitute a Tyrosine-protein phosphatase domain; that stretch reads GLTRILPHLY…LLEYERSLKL (143 aa). The Phosphocysteine intermediate role is filled by Cys246. A disordered region spans residues 306–586; the sequence is LQGDPGTPSG…PAPETQFKRR (281 aa). Positions 380–389 are enriched in basic and acidic residues; the sequence is SSDRLQDTNR. Residues 431 to 448 show a composition bias toward low complexity; sequence AALGLSSPSPDSPDAAPE. Positions 555–570 are enriched in basic and acidic residues; it reads DLRRREAARAEPRDAR.

Belongs to the protein-tyrosine phosphatase family. Non-receptor class dual specificity subfamily. As to quaternary structure, monomer. As to expression, abundant in brain, heart and skeletal muscle.

The protein localises to the cytoplasm. It localises to the nucleus. The enzyme catalyses O-phospho-L-tyrosyl-[protein] + H2O = L-tyrosyl-[protein] + phosphate. It carries out the reaction O-phospho-L-seryl-[protein] + H2O = L-seryl-[protein] + phosphate. The catalysed reaction is O-phospho-L-threonyl-[protein] + H2O = L-threonyl-[protein] + phosphate. In terms of biological role, has phosphatase activity with synthetic phosphatase substrates and negatively regulates mitogen-activated protein kinase activity, presumably by catalysing their dephosphorylation. Expected to display protein phosphatase activity toward phosphotyrosine, phosphoserine and phosphothreonine residues. This is Dual specificity protein phosphatase 8 (DUSP8) from Homo sapiens (Human).